A 174-amino-acid polypeptide reads, in one-letter code: Austinoid biosynthesis clusters protein H (174 aa).

Belongs to the trt14 isomerase family. As to quaternary structure, homodimer.

It participates in secondary metabolite biosynthesis; terpenoid biosynthesis. Functionally, part of the gene cluster B that mediates the biosynthesis of austinol and dehydroaustinol, two fungal meroterpenoids. The first step of the pathway is the synthesis of 3,5-dimethylorsellinic acid by the polyketide synthase ausA. 3,5-dimethylorsellinic acid is then prenylated by the polyprenyl transferase ausN. Further epoxidation by the FAD-dependent monooxygenase ausM and cyclization by the probable terpene cyclase ausL lead to the formation of protoaustinoid A. Protoaustinoid A is then oxidized to spiro-lactone preaustinoid A3 by the combined action of the FAD-binding monooxygenases ausB and ausC, and the dioxygenase ausE. Acid-catalyzed keto-rearrangement and ring contraction of the tetraketide portion of preaustinoid A3 by ausJ lead to the formation of preaustinoid A4. The aldo-keto reductase ausK, with the help of ausH, is involved in the next step by transforming preaustinoid A4 into isoaustinone which is in turn hydroxylated by the P450 monooxygenase ausI to form austinolide. Finally, the cytochrome P450 monooxygenase ausG modifies austinolide to austinol. Austinol can be further modified to dehydroaustinol which forms a diffusible complex with diorcinol that initiates conidiation. Due to genetic rearrangements of the clusters and the subsequent loss of some enzymes, the end products of the Emericella nidulans austinoid biosynthesis clusters are austinol and dehydroaustinol, even if additional enzymes, such as the O-acetyltransferase ausQ and the cytochrome P450 monooxygenase ausR are still functional. In Emericella nidulans (strain FGSC A4 / ATCC 38163 / CBS 112.46 / NRRL 194 / M139) (Aspergillus nidulans), this protein is Austinoid biosynthesis clusters protein H.